Reading from the N-terminus, the 121-residue chain is Large ribosomal subunit protein bL20c (121 aa).

The protein belongs to the bacterial ribosomal protein bL20 family.

Its subcellular location is the plastid. The protein resides in the chloroplast. Binds directly to 23S ribosomal RNA and is necessary for the in vitro assembly process of the 50S ribosomal subunit. It is not involved in the protein synthesizing functions of that subunit. This chain is Large ribosomal subunit protein bL20c, found in Lotus japonicus (Lotus corniculatus var. japonicus).